A 156-amino-acid polypeptide reads, in one-letter code: 6,7-dimethyl-8-ribityllumazine synthase (156 aa).

Residues Phe-22, Ala-56–Glu-58, and Ala-80–Ile-82 each bind 5-amino-6-(D-ribitylamino)uracil. Residue Glu-85–Thr-86 coordinates (2S)-2-hydroxy-3-oxobutyl phosphate. The active-site Proton donor is the His-88. Phe-113 lines the 5-amino-6-(D-ribitylamino)uracil pocket. Arg-127 contributes to the (2S)-2-hydroxy-3-oxobutyl phosphate binding site.

This sequence belongs to the DMRL synthase family.

The catalysed reaction is (2S)-2-hydroxy-3-oxobutyl phosphate + 5-amino-6-(D-ribitylamino)uracil = 6,7-dimethyl-8-(1-D-ribityl)lumazine + phosphate + 2 H2O + H(+). The protein operates within cofactor biosynthesis; riboflavin biosynthesis; riboflavin from 2-hydroxy-3-oxobutyl phosphate and 5-amino-6-(D-ribitylamino)uracil: step 1/2. Catalyzes the formation of 6,7-dimethyl-8-ribityllumazine by condensation of 5-amino-6-(D-ribitylamino)uracil with 3,4-dihydroxy-2-butanone 4-phosphate. This is the penultimate step in the biosynthesis of riboflavin. This is 6,7-dimethyl-8-ribityllumazine synthase from Kosmotoga olearia (strain ATCC BAA-1733 / DSM 21960 / TBF 19.5.1).